The primary structure comprises 383 residues: UDP-N-acetylglucosamine--N-acetylmuramyl-(pentapeptide) pyrophosphoryl-undecaprenol N-acetylglucosamine transferase (383 aa).

UDP-N-acetyl-alpha-D-glucosamine-binding positions include 10–12 (TGG), asparagine 124, arginine 165, serine 190, isoleucine 245, and glutamine 290. The disordered stretch occupies residues 364-383 (PFGQAREPGQKPARPPDLAS).

The protein belongs to the glycosyltransferase 28 family. MurG subfamily.

The protein resides in the cell inner membrane. It carries out the reaction di-trans,octa-cis-undecaprenyl diphospho-N-acetyl-alpha-D-muramoyl-L-alanyl-D-glutamyl-meso-2,6-diaminopimeloyl-D-alanyl-D-alanine + UDP-N-acetyl-alpha-D-glucosamine = di-trans,octa-cis-undecaprenyl diphospho-[N-acetyl-alpha-D-glucosaminyl-(1-&gt;4)]-N-acetyl-alpha-D-muramoyl-L-alanyl-D-glutamyl-meso-2,6-diaminopimeloyl-D-alanyl-D-alanine + UDP + H(+). The protein operates within cell wall biogenesis; peptidoglycan biosynthesis. In terms of biological role, cell wall formation. Catalyzes the transfer of a GlcNAc subunit on undecaprenyl-pyrophosphoryl-MurNAc-pentapeptide (lipid intermediate I) to form undecaprenyl-pyrophosphoryl-MurNAc-(pentapeptide)GlcNAc (lipid intermediate II). In Anaeromyxobacter dehalogenans (strain 2CP-C), this protein is UDP-N-acetylglucosamine--N-acetylmuramyl-(pentapeptide) pyrophosphoryl-undecaprenol N-acetylglucosamine transferase.